Consider the following 507-residue polypeptide: Glycerol kinase (507 aa).

Thr-14 provides a ligand contact to ADP. ATP contacts are provided by Thr-14, Thr-15, and Ser-16. Residue Thr-14 coordinates sn-glycerol 3-phosphate. Arg-18 contacts ADP. The sn-glycerol 3-phosphate site is built by Arg-84, Glu-85, Tyr-136, and Asp-246. Positions 84, 85, 136, 246, and 247 each coordinate glycerol. ADP-binding residues include Thr-268 and Gly-311. 4 residues coordinate ATP: Thr-268, Gly-311, Gln-315, and Gly-412. Positions 412 and 416 each coordinate ADP.

The protein belongs to the FGGY kinase family.

It carries out the reaction glycerol + ATP = sn-glycerol 3-phosphate + ADP + H(+). The protein operates within polyol metabolism; glycerol degradation via glycerol kinase pathway; sn-glycerol 3-phosphate from glycerol: step 1/1. Its activity is regulated as follows. Inhibited by fructose 1,6-bisphosphate (FBP). Key enzyme in the regulation of glycerol uptake and metabolism. Catalyzes the phosphorylation of glycerol to yield sn-glycerol 3-phosphate. The protein is Glycerol kinase of Vibrio atlanticus (strain LGP32) (Vibrio splendidus (strain Mel32)).